The following is a 502-amino-acid chain: Glutamate--tRNA ligase (502 aa).

Positions 9-19 (PSPTGFPHVGT) match the 'HIGH' region motif. The 'KMSKS' region motif lies at 250–254 (KLSKR). K253 provides a ligand contact to ATP.

The protein belongs to the class-I aminoacyl-tRNA synthetase family. Glutamate--tRNA ligase type 1 subfamily. In terms of assembly, monomer.

It localises to the cytoplasm. The catalysed reaction is tRNA(Glu) + L-glutamate + ATP = L-glutamyl-tRNA(Glu) + AMP + diphosphate. Its function is as follows. Catalyzes the attachment of glutamate to tRNA(Glu) in a two-step reaction: glutamate is first activated by ATP to form Glu-AMP and then transferred to the acceptor end of tRNA(Glu). This Acinetobacter baylyi (strain ATCC 33305 / BD413 / ADP1) protein is Glutamate--tRNA ligase.